A 78-amino-acid polypeptide reads, in one-letter code: Acyl carrier protein (78 aa).

The region spanning 2–77 (SNIEQQVKKI…LAIDYINAHN (76 aa)) is the Carrier domain. Serine 37 is subject to O-(pantetheine 4'-phosphoryl)serine.

The protein belongs to the acyl carrier protein (ACP) family. 4'-phosphopantetheine is transferred from CoA to a specific serine of apo-ACP by AcpS. This modification is essential for activity because fatty acids are bound in thioester linkage to the sulfhydryl of the prosthetic group.

Its subcellular location is the cytoplasm. It functions in the pathway lipid metabolism; fatty acid biosynthesis. In terms of biological role, carrier of the growing fatty acid chain in fatty acid biosynthesis. The chain is Acyl carrier protein from Neisseria gonorrhoeae (strain ATCC 700825 / FA 1090).